Here is a 181-residue protein sequence, read N- to C-terminus: Isopentenyl-diphosphate Delta-isomerase (181 aa).

The Mn(2+) site is built by histidine 24 and histidine 30. Residues 28–168 enclose the Nudix hydrolase domain; the sequence is LLHLAFSVLL…PDTFSVWFPT (141 aa). Cysteine 68 is an active-site residue. Cysteine 68 lines the Mg(2+) pocket. Histidine 70 contributes to the Mn(2+) binding site. Glutamate 88 is a Mg(2+) binding site. 2 residues coordinate Mn(2+): glutamate 117 and glutamate 119. Glutamate 119 is an active-site residue.

This sequence belongs to the IPP isomerase type 1 family. It depends on Mg(2+) as a cofactor. Mn(2+) serves as cofactor.

Its subcellular location is the cytoplasm. It carries out the reaction isopentenyl diphosphate = dimethylallyl diphosphate. It functions in the pathway isoprenoid biosynthesis; dimethylallyl diphosphate biosynthesis; dimethylallyl diphosphate from isopentenyl diphosphate: step 1/1. Catalyzes the 1,3-allylic rearrangement of the homoallylic substrate isopentenyl (IPP) to its highly electrophilic allylic isomer, dimethylallyl diphosphate (DMAPP). In Aliivibrio fischeri (strain ATCC 700601 / ES114) (Vibrio fischeri), this protein is Isopentenyl-diphosphate Delta-isomerase.